The sequence spans 64 residues: Large ribosomal subunit protein bL28 (64 aa).

Belongs to the bacterial ribosomal protein bL28 family.

In Mycoplasmoides gallisepticum (strain R(low / passage 15 / clone 2)) (Mycoplasma gallisepticum), this protein is Large ribosomal subunit protein bL28.